Reading from the N-terminus, the 2422-residue chain is Non-reducing polyketide synthase trt4 (2422 aa).

Residues 14–196 (VLFGPKCPKT…HHSDHTSVVQ (183 aa)) are N-terminal acylcarrier protein transacylase domain (SAT). Residues 289 to 314 (VEPPDSHHNTNTTQDSDVTTNASPLT) form a disordered region. Over residues 297-312 (NTNTTQDSDVTTNASP) the composition is skewed to polar residues. A Ketosynthase family 3 (KS3) domain is found at 329-745 (TVPIAVTGMA…GSNAAIVLQE (417 aa)). Residues C494, H629, and H668 each act as for beta-ketoacyl synthase activity in the active site. The segment at 856 to 1121 (LCFGGQTGNT…CPIDLSGPQA (266 aa)) is malonyl-CoA:ACP transacylase (MAT) domain. S904 functions as the For acyl/malonyl transferase activity in the catalytic mechanism. The N-terminal hotdog fold stretch occupies residues 1190–1316 (PSLVKLLNND…GKISISSEAN (127 aa)). The PKS/mFAS DH domain occupies 1190–1495 (PSLVKLLNND…FTCVSIQSLK (306 aa)). The product template (PT) domain stretch occupies residues 1191-1494 (SLVKLLNNDG…TFTCVSIQSL (304 aa)). H1221 acts as the Proton acceptor; for dehydratase activity in catalysis. The interval 1345-1495 (SSGLKRSTVY…FTCVSIQSLK (151 aa)) is C-terminal hotdog fold. D1402 acts as the Proton donor; for dehydratase activity in catalysis. The Carrier domain occupies 1535-1612 (SRSEDGLRVV…GLVQRIFPGG (78 aa)). S1572 bears the O-(pantetheine 4'-phosphoryl)serine mark. The segment at 1615–1636 (AHVETHSQPPDKIGITTGDRMP) is disordered. The tract at residues 1774–2007 (QHASEHKLLH…GFNWVDWTDN (234 aa)) is methyltransferase (CMeT) domain. Residues 2036–2383 (NAVAEETLVY…LAPHIPTDEY (348 aa)) are thioesterase (TE) domain. Active-site for thioesterase activity residues include S2159, D2320, and H2352.

It catalyses the reaction 3 malonyl-CoA + acetyl-CoA + 2 S-adenosyl-L-methionine = 3,5-dimethylorsellinate + 2 S-adenosyl-L-homocysteine + 3 CO2 + 4 CoA. Its pathway is secondary metabolite biosynthesis; terpenoid biosynthesis. In terms of biological role, non-reducing polyketide synthase; part of the gene cluster that mediates the biosynthesis of terretonin, a fungal meroterpenoid that acts as a mycotoxin. The first step of the pathway is the synthesis of 3,5-dimethylorsellinic acid (DMOA) by the polyketide synthase trt4. DMOA is then prenylated into farnesyl-DMOA by the polyprenyl transferase trt2. Methylation by the methyltransferase trt5 then leads to farnesyl-DMOA methyl ester which is further subject to epoxidation by the FAD-dependent monooxygenase trt8 to yield epoxyfarnesyl-DMOA methyl ester. Cyclization of epoxyfarnesyl-DMOA methyl ester by the terpene cyclase trt1 leads to a tetracycle intermediate which is in turn converted to preterretonin. Dehydrogenase trt9 comes next to transform preterretonin to preterrenoid. The FAD-dependent monooxygenase trt3 is then required for the C-hydroxylation at C16 of preterrenoid to yield terrenoid. The cytochrome P450 trt6 catalyzes three successive oxidations to transform terrenoid into an unstable intermediate, which then undergoes the D-ring expansion and unusual rearrangement of the methoxy group to afford the core skeleton of terretonin. Trt14 catalyzes the D-ring expansion of terretonin involving intramolecular methoxy rearrangement as well as the hydrolysis of the expanded D-ring and the methyl ester moiety. Finally, the nonheme iron-dependent dioxygenase trt7 accomplishes the last two oxidation reactions steps to complete the biosynthesis of terretonin. Terretonin C is produced via spontaneous decarboxylation of the terretonin precursor. Another shunt product of the terretonin biosynthesis is dihydrofarnesyl-DMOA, derived from epoxyfarnesyl-DMOA through hydrolysis of the epoxide. This is Non-reducing polyketide synthase trt4 from Aspergillus terreus (strain NIH 2624 / FGSC A1156).